A 79-amino-acid polypeptide reads, in one-letter code: RNA-binding protein Hfq (79 aa).

Residues 10–69 form the Sm domain; sequence DPFLNALRKEHVPVSIYLVNGIKLQGNIESFDQYVVLLRNTVTQMVYKHAISTVVPARAV.

Belongs to the Hfq family. Homohexamer.

RNA chaperone that binds small regulatory RNA (sRNAs) and mRNAs to facilitate mRNA translational regulation in response to envelope stress, environmental stress and changes in metabolite concentrations. Also binds with high specificity to tRNAs. The sequence is that of RNA-binding protein Hfq from Ralstonia nicotianae (strain ATCC BAA-1114 / GMI1000) (Ralstonia solanacearum).